A 1416-amino-acid chain; its full sequence is Telomere-associated protein RIF1 (1416 aa).

Disordered regions lie at residues 789–858 (PIRK…PVVQ), 886–984 (PEVA…HLTG), 1021–1054 (ARAQ…QAPP), and 1166–1186 (TART…APEE). A compositionally biased stretch (low complexity) spans 928–945 (GSSGDPAASAGAVAAGEM). Polar residues predominate over residues 1029 to 1050 (QVSTPTSELNELTGTDHTSTPI).

It belongs to the RIF1 family. Highly divergent. Interacts with Pp1-87b. Interacts with SuUR (via SNF2-like region). In terms of processing, phosphorylated, probably by Cdk1; phosphorylation regulates dissociation from heterochromatin. In terms of tissue distribution, expressed in nurse cells and follicle cells in the adult female (at protein level). Detected in adult at extremely low levels.

The protein resides in the nucleus. It is found in the chromosome. The protein localises to the telomere. Regulates the timing of initiation of DNA replication. Functions in copy number control by promoting the underreplication of DNA, which is found in many late replicating euchromatic regions of salivary gland polytene chromosomes. Promotes underreplication by localizing to active DNA replication forks in a partially SuUR-dependent manner, and inhibiting replication fork progression. Might also work as an adapter to recruit Pp1-87B to multiple sites on the chromosome and may function with Pp1-87B to mediate underreplication. Plays an essential role in embryonic development, in the transition from larvae to pupae and, probably, in proliferating tissues later on. In embryos, during mid-blastula transition, binds to and selectively delays the replication of large blocks of repetitive DNA satellite sequences during S phase in response to the activity of Cdk1; maternal Rif1 is specifically required for the normal extension of S phase 14. Unlike mammalian orthologs, does not appear to play a role in DNA damage repair. The polypeptide is Telomere-associated protein RIF1 (Drosophila melanogaster (Fruit fly)).